The primary structure comprises 217 residues: Cytidylate kinase (217 aa).

9–17 (GPAGAGKST) lines the ATP pocket.

The protein belongs to the cytidylate kinase family. Type 1 subfamily.

Its subcellular location is the cytoplasm. The catalysed reaction is CMP + ATP = CDP + ADP. The enzyme catalyses dCMP + ATP = dCDP + ADP. The polypeptide is Cytidylate kinase (Clostridium acetobutylicum (strain ATCC 824 / DSM 792 / JCM 1419 / IAM 19013 / LMG 5710 / NBRC 13948 / NRRL B-527 / VKM B-1787 / 2291 / W)).